The sequence spans 348 residues: 3-isopropylmalate dehydrogenase (348 aa).

76 to 87 (GPKWTDPNNRPE) is an NAD(+) binding site. Substrate is bound by residues Arg94, Arg104, Arg132, and Asp217. Mg(2+)-binding residues include Asp217, Asp241, and Asp245. 275–287 (GSAPDIAGKNVAN) is a binding site for NAD(+).

The protein belongs to the isocitrate and isopropylmalate dehydrogenases family. LeuB type 1 subfamily. Homodimer. It depends on Mg(2+) as a cofactor. The cofactor is Mn(2+).

It is found in the cytoplasm. The catalysed reaction is (2R,3S)-3-isopropylmalate + NAD(+) = 4-methyl-2-oxopentanoate + CO2 + NADH. It participates in amino-acid biosynthesis; L-leucine biosynthesis; L-leucine from 3-methyl-2-oxobutanoate: step 3/4. In terms of biological role, catalyzes the oxidation of 3-carboxy-2-hydroxy-4-methylpentanoate (3-isopropylmalate) to 3-carboxy-4-methyl-2-oxopentanoate. The product decarboxylates to 4-methyl-2 oxopentanoate. This is 3-isopropylmalate dehydrogenase from Staphylococcus aureus (strain NCTC 8325 / PS 47).